Reading from the N-terminus, the 262-residue chain is Inactive snake venom serine proteinase 13 (262 aa).

Positions 1–18 (MGLIRVLANLLILQLSYA) are cleaved as a signal peptide. The propeptide occupies 19–24 (QKSSEL). The 226-residue stretch at 25–250 (VIGGDECNIN…HLDWIQSIIA (226 aa)) folds into the Peptidase S1 domain. 6 disulfides stabilise this stretch: cysteine 31–cysteine 162, cysteine 49–cysteine 65, cysteine 97–cysteine 257, cysteine 141–cysteine 211, cysteine 173–cysteine 190, and cysteine 201–cysteine 226. N-linked (GlcNAc...) asparagine glycans are attached at residues asparagine 78, asparagine 102, and asparagine 153.

Belongs to the peptidase S1 family. Snake venom subfamily. Monomer. Expressed by the venom gland.

It is found in the secreted. The sequence is that of Inactive snake venom serine proteinase 13 from Crotalus adamanteus (Eastern diamondback rattlesnake).